The following is a 444-amino-acid chain: tRNA-2-methylthio-N(6)-dimethylallyladenosine synthase (444 aa).

The MTTase N-terminal domain occupies 6 to 124 (KTFKIITYGC…LPQLIEEIKA (119 aa)). Positions 15, 51, 85, 161, 165, and 168 each coordinate [4Fe-4S] cluster. The 231-residue stretch at 147-377 (RARGAQAFVT…MELQNSISLA (231 aa)) folds into the Radical SAM core domain. The TRAM domain maps to 380-443 (EALVGQEVEV…TWLLKGEMVD (64 aa)).

The protein belongs to the methylthiotransferase family. MiaB subfamily. In terms of assembly, monomer. Requires [4Fe-4S] cluster as cofactor.

It localises to the cytoplasm. It carries out the reaction N(6)-dimethylallyladenosine(37) in tRNA + (sulfur carrier)-SH + AH2 + 2 S-adenosyl-L-methionine = 2-methylsulfanyl-N(6)-dimethylallyladenosine(37) in tRNA + (sulfur carrier)-H + 5'-deoxyadenosine + L-methionine + A + S-adenosyl-L-homocysteine + 2 H(+). Its function is as follows. Catalyzes the methylthiolation of N6-(dimethylallyl)adenosine (i(6)A), leading to the formation of 2-methylthio-N6-(dimethylallyl)adenosine (ms(2)i(6)A) at position 37 in tRNAs that read codons beginning with uridine. The protein is tRNA-2-methylthio-N(6)-dimethylallyladenosine synthase of Moorella thermoacetica (strain ATCC 39073 / JCM 9320).